A 350-amino-acid chain; its full sequence is Biotin synthase (350 aa).

The 228-residue stretch at 38–265 (NHVQVSTLLS…MSAVRLSAGR (228 aa)) folds into the Radical SAM core domain. 3 residues coordinate [4Fe-4S] cluster: cysteine 53, cysteine 57, and cysteine 60. [2Fe-2S] cluster is bound by residues cysteine 97, cysteine 128, cysteine 188, and arginine 260.

This sequence belongs to the radical SAM superfamily. Biotin synthase family. As to quaternary structure, homodimer. [4Fe-4S] cluster serves as cofactor. Requires [2Fe-2S] cluster as cofactor.

It carries out the reaction (4R,5S)-dethiobiotin + (sulfur carrier)-SH + 2 reduced [2Fe-2S]-[ferredoxin] + 2 S-adenosyl-L-methionine = (sulfur carrier)-H + biotin + 2 5'-deoxyadenosine + 2 L-methionine + 2 oxidized [2Fe-2S]-[ferredoxin]. It functions in the pathway cofactor biosynthesis; biotin biosynthesis; biotin from 7,8-diaminononanoate: step 2/2. Functionally, catalyzes the conversion of dethiobiotin (DTB) to biotin by the insertion of a sulfur atom into dethiobiotin via a radical-based mechanism. The polypeptide is Biotin synthase (Vibrio atlanticus (strain LGP32) (Vibrio splendidus (strain Mel32))).